The sequence spans 182 residues: Large ribosomal subunit protein uL10 (182 aa).

It belongs to the universal ribosomal protein uL10 family. Part of the ribosomal stalk of the 50S ribosomal subunit. The N-terminus interacts with L11 and the large rRNA to form the base of the stalk. The C-terminus forms an elongated spine to which L12 dimers bind in a sequential fashion forming a multimeric L10(L12)X complex.

Forms part of the ribosomal stalk, playing a central role in the interaction of the ribosome with GTP-bound translation factors. The sequence is that of Large ribosomal subunit protein uL10 from Koribacter versatilis (strain Ellin345).